The chain runs to 292 residues: tRNA-cytidine(32) 2-sulfurtransferase (292 aa).

The PP-loop motif motif lies at 53–58; the sequence is SGGKDS. Residues Cys-128, Cys-131, and Cys-219 each contribute to the [4Fe-4S] cluster site.

It belongs to the TtcA family. As to quaternary structure, homodimer. The cofactor is Mg(2+). [4Fe-4S] cluster is required as a cofactor.

Its subcellular location is the cytoplasm. It catalyses the reaction cytidine(32) in tRNA + S-sulfanyl-L-cysteinyl-[cysteine desulfurase] + AH2 + ATP = 2-thiocytidine(32) in tRNA + L-cysteinyl-[cysteine desulfurase] + A + AMP + diphosphate + H(+). It functions in the pathway tRNA modification. In terms of biological role, catalyzes the ATP-dependent 2-thiolation of cytidine in position 32 of tRNA, to form 2-thiocytidine (s(2)C32). The sulfur atoms are provided by the cysteine/cysteine desulfurase (IscS) system. The sequence is that of tRNA-cytidine(32) 2-sulfurtransferase from Cereibacter sphaeroides (strain ATCC 17029 / ATH 2.4.9) (Rhodobacter sphaeroides).